A 574-amino-acid polypeptide reads, in one-letter code: Streptolysin O (574 aa).

The signal sequence occupies residues Met1–Ser36. Positions Asn37–Gln52 are enriched in low complexity. Disordered stretches follow at residues Asn37–Lys64 and Lys84–Glu111. Residues Pro53–Lys64 are compositionally biased toward basic and acidic residues. The next 4 membrane-spanning stretches (beta stranded) occupy residues Lys263 to Ile276, Ile283 to Glu292, Ser361 to Ala370, and Lys378 to Ser390. The short motif at Glu532–Arg542 is the Conserved undecapeptide element. A Cholesterol binding motif is present at residues Thr564–Leu565.

Belongs to the cholesterol-dependent cytolysin family. As to quaternary structure, homooligomeric pore complex of 35 to 50 subunits; when inserted in the host membrane.

It localises to the secreted. The protein localises to the host cell membrane. Functionally, a cholesterol-dependent toxin that causes cytolysis by forming pores in cholesterol containing host membranes. After binding to target membranes, the protein undergoes a major conformation change, leading to its insertion in the host membrane and formation of an oligomeric pore complex. Cholesterol is required for binding to host membranes, membrane insertion and pore formation; cholesterol binding is mediated by a Thr-Leu pair in the C-terminus. Can be reversibly inactivated by oxidation. In Streptococcus dysgalactiae subsp. equisimilis (Streptococcus equisimilis), this protein is Streptolysin O (slo).